A 226-amino-acid polypeptide reads, in one-letter code: Large ribosomal subunit protein uL1 (226 aa).

This sequence belongs to the universal ribosomal protein uL1 family. As to quaternary structure, part of the 50S ribosomal subunit.

Its function is as follows. Binds directly to 23S rRNA. The L1 stalk is quite mobile in the ribosome, and is involved in E site tRNA release. Functionally, protein L1 is also a translational repressor protein, it controls the translation of the L11 operon by binding to its mRNA. The chain is Large ribosomal subunit protein uL1 from Mycoplasma mycoides subsp. mycoides SC (strain CCUG 32753 / NCTC 10114 / PG1).